The sequence spans 178 residues: Negative modulator of initiation of replication (178 aa).

The tract at residues 113 to 117 (RTRVY) is interaction with DNA.

This sequence belongs to the SeqA family. In terms of assembly, homodimer. Polymerizes to form helical filaments.

It localises to the cytoplasm. In terms of biological role, negative regulator of replication initiation, which contributes to regulation of DNA replication and ensures that replication initiation occurs exactly once per chromosome per cell cycle. Binds to pairs of hemimethylated GATC sequences in the oriC region, thus preventing assembly of replication proteins and re-initiation at newly replicated origins. Repression is relieved when the region becomes fully methylated. The protein is Negative modulator of initiation of replication of Photobacterium profundum (strain SS9).